A 331-amino-acid polypeptide reads, in one-letter code: Autoinducer 2 import system permease protein LsrD (331 aa).

10 helical membrane-spanning segments follow: residues Tyr7–Ser27, Ile45–Ile65, Phe67–Pro87, Ile90–Ile110, Leu118–Ile138, Leu162–Leu182, Thr212–Val232, Ser240–Asn260, Ile261–Leu281, and Ile288–Val308.

Belongs to the binding-protein-dependent transport system permease family. AraH/RbsC subfamily. As to quaternary structure, the complex is composed of two ATP-binding proteins (LsrA), two transmembrane proteins (LsrC and LsrD) and a solute-binding protein (LsrB).

It is found in the cell inner membrane. Its function is as follows. Part of the ABC transporter complex LsrABCD involved in autoinducer 2 (AI-2) import. Probably responsible for the translocation of the substrate across the membrane. The sequence is that of Autoinducer 2 import system permease protein LsrD (lsrD) from Yersinia enterocolitica serotype O:8 / biotype 1B (strain NCTC 13174 / 8081).